Here is a 97-residue protein sequence, read N- to C-terminus: Large ribosomal subunit protein bL28 (97 aa).

This sequence belongs to the bacterial ribosomal protein bL28 family.

This Rhizorhabdus wittichii (strain DSM 6014 / CCUG 31198 / JCM 15750 / NBRC 105917 / EY 4224 / RW1) (Sphingomonas wittichii) protein is Large ribosomal subunit protein bL28.